Consider the following 180-residue polypeptide: Ribosome maturation factor RimM (180 aa).

The PRC barrel domain maps to 104–177 (EGEFHLLDLV…WLLLTPPPGL (74 aa)).

Belongs to the RimM family. Binds ribosomal protein uS19.

The protein localises to the cytoplasm. Its function is as follows. An accessory protein needed during the final step in the assembly of 30S ribosomal subunit, possibly for assembly of the head region. Essential for efficient processing of 16S rRNA. May be needed both before and after RbfA during the maturation of 16S rRNA. It has affinity for free ribosomal 30S subunits but not for 70S ribosomes. In Synechococcus sp. (strain CC9902), this protein is Ribosome maturation factor RimM.